The following is a 1154-amino-acid chain: Polyketide biosynthesis protein ThaF (1154 aa).

Positions 330–714 are acyl transferase; that stretch reads MHAFLFPGQG…TNGIAPAARV (385 aa). The interval 627-689 is disordered; the sequence is SAVAASAPPR…PAPAPAPAPA (63 aa). The span at 641–672 shows a compositional bias: low complexity; it reads ADAQPPAASPARAATAASTMPPASASASASAP. The span at 673–689 shows a compositional bias: pro residues; the sequence is APAPAPAPAPAPAPAPA.

The protein in the N-terminal section; belongs to the FabD family.

Its subcellular location is the cytoplasm. The enzyme catalyses holo-[ACP] + malonyl-CoA = malonyl-[ACP] + CoA. The protein operates within antibiotic biosynthesis. In terms of biological role, involved in production of the polyketide antibiotic thailandamide. Probably has an acyl transferase activity and could also have a flavin mononucleotide-dependent oxidoreductase activity. The sequence is that of Polyketide biosynthesis protein ThaF from Burkholderia thailandensis (strain ATCC 700388 / DSM 13276 / CCUG 48851 / CIP 106301 / E264).